The chain runs to 257 residues: Triosephosphate isomerase (257 aa).

9-11 is a substrate binding site; the sequence is NWK. Residue His-95 is the Electrophile of the active site. The Proton acceptor role is filled by Glu-168. Substrate contacts are provided by residues Gly-174, Ser-213, and 234 to 235; that span reads GG.

Belongs to the triosephosphate isomerase family. As to quaternary structure, homodimer.

The protein localises to the cytoplasm. The catalysed reaction is D-glyceraldehyde 3-phosphate = dihydroxyacetone phosphate. It functions in the pathway carbohydrate biosynthesis; gluconeogenesis. It participates in carbohydrate degradation; glycolysis; D-glyceraldehyde 3-phosphate from glycerone phosphate: step 1/1. Functionally, involved in the gluconeogenesis. Catalyzes stereospecifically the conversion of dihydroxyacetone phosphate (DHAP) to D-glyceraldehyde-3-phosphate (G3P). This chain is Triosephosphate isomerase, found in Acidithiobacillus ferrooxidans (strain ATCC 23270 / DSM 14882 / CIP 104768 / NCIMB 8455) (Ferrobacillus ferrooxidans (strain ATCC 23270)).